A 182-amino-acid chain; its full sequence is Ribosome-recycling factor (182 aa).

This sequence belongs to the RRF family.

Its subcellular location is the cytoplasm. In terms of biological role, responsible for the release of ribosomes from messenger RNA at the termination of protein biosynthesis. May increase the efficiency of translation by recycling ribosomes from one round of translation to another. This Hydrogenobaculum sp. (strain Y04AAS1) protein is Ribosome-recycling factor.